The chain runs to 448 residues: T-box transcription factor TBX19 (448 aa).

Residues 45–218 (LEDAPLWQRF…YNPFAKAFLD (174 aa)) constitute a DNA-binding region (T-box).

The protein resides in the nucleus. Its function is as follows. Transcriptional regulator involved in developmental processes. Can activate POMC gene expression and repress the alpha glycoprotein subunit and thyroid-stimulating hormone beta promoters. This chain is T-box transcription factor TBX19, found in Homo sapiens (Human).